Reading from the N-terminus, the 320-residue chain is MIKKIGVLTSGGDAPGMNAAVRGVVRTALSEGLEVYGVYDGYLGLYEGRIEKLDRSSVSDVINKGGTFLGSARFPEFKEVEVREQAIENLKKHGIDALVVIGGDGSYMGAKKLTEMGYPCIGLPGTIDNDIAGTDYTIGYLTALNTVIDAIDRLRDTSSSHQRISIVEIMGRHCGDLTLMSAIAGGCEYIITPETGLDKDKLIKNIQDGIAKGKKHAIIALTELMMDANELAREIEAATGRETRATVLGHIQRGGRPAAFDRVLASRMGNYAVHLLMEGHGGRCVGIVKEQLVHHDIIDAIENMKRPVRSDLYQVAEELF.

Gly12 contacts ATP. Position 22-26 (22-26 (RGVVR)) interacts with ADP. ATP-binding positions include 73-74 (RF) and 103-106 (GDGS). Asp104 lines the Mg(2+) pocket. Residue 126–128 (TID) participates in substrate binding. Catalysis depends on Asp128, which acts as the Proton acceptor. Arg155 serves as a coordination point for ADP. Residues Arg163 and 170–172 (MGR) contribute to the substrate site. Residues 186 to 188 (GCE), Lys212, and 214 to 216 (KKH) contribute to the ADP site. Residues Glu223, Arg244, and 250–253 (HIQR) each bind substrate.

This sequence belongs to the phosphofructokinase type A (PFKA) family. ATP-dependent PFK group I subfamily. Prokaryotic clade 'B1' sub-subfamily. In terms of assembly, homotetramer. Mg(2+) serves as cofactor.

It is found in the cytoplasm. It catalyses the reaction beta-D-fructose 6-phosphate + ATP = beta-D-fructose 1,6-bisphosphate + ADP + H(+). Its pathway is carbohydrate degradation; glycolysis; D-glyceraldehyde 3-phosphate and glycerone phosphate from D-glucose: step 3/4. Allosterically activated by ADP and other diphosphonucleosides, and allosterically inhibited by phosphoenolpyruvate. Functionally, catalyzes the phosphorylation of D-fructose 6-phosphate to fructose 1,6-bisphosphate by ATP, the first committing step of glycolysis. In Vibrio campbellii (strain ATCC BAA-1116), this protein is ATP-dependent 6-phosphofructokinase.